Reading from the N-terminus, the 259-residue chain is Small ribosomal subunit protein uS2 (259 aa).

A disordered region spans residues 232 to 259; the sequence is KAMEAEETKAAEKAVETEAKEETPQEAK.

This sequence belongs to the universal ribosomal protein uS2 family.

This Maridesulfovibrio salexigens (strain ATCC 14822 / DSM 2638 / NCIMB 8403 / VKM B-1763) (Desulfovibrio salexigens) protein is Small ribosomal subunit protein uS2.